The following is a 312-amino-acid chain: DNA-directed RNA polymerase subunit alpha (312 aa).

An alpha N-terminal domain (alpha-NTD) region spans residues Met1–Ser226. The tract at residues Thr243–Lys312 is alpha C-terminal domain (alpha-CTD).

Belongs to the RNA polymerase alpha chain family. Homodimer. The RNAP catalytic core consists of 2 alpha, 1 beta, 1 beta' and 1 omega subunit. When a sigma factor is associated with the core the holoenzyme is formed, which can initiate transcription.

It catalyses the reaction RNA(n) + a ribonucleoside 5'-triphosphate = RNA(n+1) + diphosphate. In terms of biological role, DNA-dependent RNA polymerase catalyzes the transcription of DNA into RNA using the four ribonucleoside triphosphates as substrates. The protein is DNA-directed RNA polymerase subunit alpha of Lactococcus lactis subsp. cremoris (strain MG1363).